Reading from the N-terminus, the 629-residue chain is Iron multicopper oxidase fer1 (629 aa).

Positions 1-29 (MVAPQRRTVMPALGLLASSLCSLLLTANA) are cleaved as a signal peptide. Plastocyanin-like domains are found at residues 44 to 164 (VNPD…IHPD) and 175 to 338 (DDYT…TISY). Residues Asn-58 and Asn-69 are each glycosylated (N-linked (GlcNAc...) asparagine). Residues His-91 and His-93 each contribute to the Cu cation site. The N-linked (GlcNAc...) asparagine glycan is linked to Asn-98. The Cu cation site is built by His-144 and His-146. N-linked (GlcNAc...) asparagine glycosylation is found at Asn-188, Asn-222, Asn-236, Asn-253, Asn-303, Asn-331, and Asn-398. The Plastocyanin-like 3 domain occupies 401–537 (YVAPQVPALF…LASIFIEAPD (137 aa)). Residues His-452, His-455, and His-457 each coordinate Cu cation. A glycan (N-linked (GlcNAc...) asparagine) is linked at Asn-482. Cu cation is bound by residues His-517, Cys-518, His-519, and His-523. Asn-569 is a glycosylation site (N-linked (GlcNAc...) asparagine). The chain crosses the membrane as a helical span at residues 592–612 (AIAAFTGCIITGLLGLATVVV).

It belongs to the multicopper oxidase family. Cu cation is required as a cofactor.

Its subcellular location is the cell membrane. Its function is as follows. Iron transport multicopper oxidase, which is required for Fe(2+) high affinity uptake. May be required to oxidize Fe(2+) and release it from the transporter. Essential component of copper-dependent iron transport. In Mycosarcoma maydis (Corn smut fungus), this protein is Iron multicopper oxidase fer1.